The following is a 588-amino-acid chain: Vicilin C72 (588 aa).

An N-terminal signal peptide occupies residues 1–25 (MVRNKSACVVLLFSLFLSFGLLCSA). 2 disordered regions span residues 159–183 (REREEEAEEEETEEGEQEQSHNPFH) and 460–487 (PRQSSFEEEEEQQQEQEQEEERRSGQYR). Residues 163 to 175 (EEAEEEETEEGEQ) show a composition bias toward acidic residues. 2 consecutive Cupin type-1 domains span residues 182-340 (FHFH…EQLD) and 386-566 (FNLL…RLVD). Residues 465–478 (FEEEEEQQQEQEQE) are compositionally biased toward acidic residues.

It belongs to the 7S seed storage protein family.

It localises to the vacuole. The protein resides in the aleurone grain. Its function is as follows. Seed storage protein. In Gossypium hirsutum (Upland cotton), this protein is Vicilin C72.